A 1358-amino-acid polypeptide reads, in one-letter code: Tenascin-R (1358 aa).

The N-terminal stretch at 1–31 (MGIDGETVVLKNMLIGVNLILLGSMLKPSEC) is a signal peptide. Residues 37–58 (TERAQRQTVEEEGGASSYNTSS) are disordered. N-linked (GlcNAc...) asparagine glycosylation is present at Asn55. Residues 127 to 157 (CASSSQVLQELLSRIEMLEREVSLLRDQCNT) are a coiled coil. An O-linked (Xyl...) (chondroitin sulfate) serine glycan is attached at Ser176. Residues Asn180 and Asn198 are each glycosylated (N-linked (GlcNAc...) asparagine). EGF-like domains are found at residues 188 to 199 (CICNEGWFGKNC), 219 to 230 (CICDSEYSGDDC), and 250 to 261 (CVCEEPYTGEDC). Residue Ser271 is glycosylated (O-linked (Xyl...) (chondroitin sulfate) serine). Asn278 is a glycosylation site (N-linked (GlcNAc...) asparagine). One can recognise an EGF-like 4 domain in the interval 281–292 (CLCQEGYAGEDC). 2 disulfide bridges follow: Cys297/Cys307 and Cys314/Cys323. Residue Ser302 is glycosylated (O-linked (Xyl...) (chondroitin sulfate) serine). In terms of domain architecture, EGF-like 5 spans 312 to 323 (CICEEGYQGPDC). 9 consecutive Fibronectin type-III domains span residues 328–420 (PPED…TPQG), 421–505 (LQFK…TVID), 506–597 (GPTQ…IDAP), 598–687 (KNLR…TELD), 688–777 (SPRD…FRPI), 778–865 (SHLH…TGID), 866–955 (PPKN…AMDS), 956–1042 (PMDL…TLLD), and 1043–1131 (PPDN…GGRV). N-linked (GlcNAc...) asparagine glycans are attached at residues Asn392, Asn470, and Asn581. Position 724 is a phosphoserine (Ser724). Asn791, Asn869, Asn874, Asn1036, Asn1046, and Asn1261 each carry an N-linked (GlcNAc...) asparagine glycan. Residues 1129 to 1344 (GRVFSHPQDC…FVEMKMRPYI (216 aa)) form the Fibrinogen C-terminal domain.

Belongs to the tenascin family. Interacts with BCAN and ACAN in a calcium-dependent manner. Interacts with SCN2B, PTPRZ1, and CSPG3. Forms oligomers. Isoforms 1 and 2 form respectively trimeric (tribrachion) and dimeric kink-armed rodlike structures, which are linked by disulfide bridges. Interacts with CNTN1, TNC and FN1. Post-translationally, contains N-linked oligosaccharides with a sulfated carbohydrate structures. Contains N-linked oligosaccharides, O-linked sialylated structures and O-linked chondroitin sulfate glycosaminoglycans. Brain-specific.

The protein resides in the secreted. It localises to the extracellular space. It is found in the extracellular matrix. In terms of biological role, neural extracellular matrix (ECM) protein involved in interactions with different cells and matrix components. Theses interactions can influence cellular behavior by either evoking a stable adhesion and differentiation, or repulsion and inhibition of neurite growth. Binding to cell surface gangliosides inhibits RGD-dependent integrin-mediated cell adhesion and results in an inhibition of PTK2/FAK1 (FAK) phosphorylation and cell detachment. Binding to membrane surface sulfatides results in a oligodendrocyte adhesion and differentiation. Interaction with CNTN1 induces a repulsion of neurons and an inhibition of neurite outgrowth. Interacts with SCN2B may play a crucial role in clustering and regulation of activity of sodium channels at nodes of Ranvier. TNR-linked chondroitin sulfate glycosaminoglycans are involved in the interaction with FN1 and mediates inhibition of cell adhesion and neurite outgrowth. The highly regulated addition of sulfated carbohydrate structure may modulate the adhesive properties of TNR over the course of development and during synapse maintenance. The sequence is that of Tenascin-R (Tnr) from Mus musculus (Mouse).